The sequence spans 215 residues: MNMSYLFFFFFIQLVLKYINSKVTENTICKDGFLIQMSNHFECNCNPGFVLTSESTCENKVECNANSLDKRCGDFSKCAYKDLQQKELTCKCIDGYDLEESICVPNECKNFRCESGKCVLDPKQEAKIPMCSCFIGIVPSKENNNTCTIEGQTECTLKCTKENETCKKTSGIYKCDCKDGYTFDKEENACISFSLFNILNLSIIFIISLIYFYII.

The N-terminal stretch at 1–16 (MNMSYLFFFFFIQLVL) is a signal peptide. Residues 29–58 (CKDGFLIQMSNHFECNCNPGFVLTSESTCE) form the EGF-like 1; truncated domain. EGF-like domains lie at 59 to 104 (NKVE…SICV), 104 to 148 (VPNE…NTCT), and 151 to 191 (GQTE…NACI). Intrachain disulfides connect C63/C78, C72/C90, C92/C103, C108/C118, C113/C131, C133/C147, C155/C166, C159/C175, and C177/C190. N-linked (GlcNAc...) asparagine glycosylation is found at N144 and N163. S192 is lipidated: GPI-anchor amidated serine. Positions 193–215 (FSLFNILNLSIIFIISLIYFYII) are cleaved as a propeptide — removed in mature form. An N-linked (GlcNAc...) asparagine glycan is attached at N200.

The protein localises to the cell membrane. The sequence is that of 25 kDa ookinete surface antigen from Plasmodium gallinaceum.